A 247-amino-acid polypeptide reads, in one-letter code: Probable transcriptional regulatory protein ABO_0750 (247 aa).

It belongs to the TACO1 family.

The protein resides in the cytoplasm. The protein is Probable transcriptional regulatory protein ABO_0750 of Alcanivorax borkumensis (strain ATCC 700651 / DSM 11573 / NCIMB 13689 / SK2).